The sequence spans 249 residues: 2,3-bisphosphoglycerate-dependent phosphoglycerate mutase (249 aa).

Substrate is bound by residues 9–16 (RHGQSQWN), 22–23 (TG), Arg-61, 88–91 (ERHY), Lys-99, 115–116 (RR), and 184–185 (GN). The active-site Tele-phosphohistidine intermediate is the His-10. Glu-88 (proton donor/acceptor) is an active-site residue.

The protein belongs to the phosphoglycerate mutase family. BPG-dependent PGAM subfamily. In terms of assembly, homodimer.

It catalyses the reaction (2R)-2-phosphoglycerate = (2R)-3-phosphoglycerate. The protein operates within carbohydrate degradation; glycolysis; pyruvate from D-glyceraldehyde 3-phosphate: step 3/5. In terms of biological role, catalyzes the interconversion of 2-phosphoglycerate and 3-phosphoglycerate. This is 2,3-bisphosphoglycerate-dependent phosphoglycerate mutase from Xylella fastidiosa (strain M12).